Consider the following 140-residue polypeptide: uncharacterized protein (140 aa).

Positions 34-88 (PLRWRNRARNREKPHSPRAVSSPATHSLPPSNPCRLTPTLSSARPREGSCPSKCS) are disordered.

In terms of tissue distribution, expressed in a range of cell lines, including B-cell lymphoma and prostate.

This is an uncharacterized protein from Homo sapiens (Human).